Here is a 418-residue protein sequence, read N- to C-terminus: Elongation factor Tu, chloroplastic (418 aa).

The tr-type G domain occupies 10 to 214 (KPHVNIGTIG…NVDSYIPTPQ (205 aa)). The tract at residues 19-26 (GHVDHGKT) is G1. 19–26 (GHVDHGKT) contacts GTP. Thr26 is a binding site for Mg(2+). Residues 60-64 (GITIN) form a G2 region. A G3 region spans residues 81–84 (DCPG). GTP is bound by residues 81-85 (DCPGH) and 136-139 (NKED). The segment at 136–139 (NKED) is G4. The segment at 174-176 (SAL) is G5.

This sequence belongs to the TRAFAC class translation factor GTPase superfamily. Classic translation factor GTPase family. EF-Tu/EF-1A subfamily.

It is found in the plastid. Its subcellular location is the chloroplast. The catalysed reaction is GTP + H2O = GDP + phosphate + H(+). In terms of biological role, GTP hydrolase that promotes the GTP-dependent binding of aminoacyl-tRNA to the A-site of ribosomes during protein biosynthesis. This Chlamydomonas reinhardtii (Chlamydomonas smithii) protein is Elongation factor Tu, chloroplastic (tufA).